The primary structure comprises 183 residues: NADH-quinone oxidoreductase subunit B 2 (183 aa).

4 residues coordinate [4Fe-4S] cluster: Cys47, Cys48, Cys113, and Cys142.

It belongs to the complex I 20 kDa subunit family. NDH-1 is composed of 14 different subunits. Subunits NuoB, C, D, E, F, and G constitute the peripheral sector of the complex. It depends on [4Fe-4S] cluster as a cofactor.

Its subcellular location is the cell inner membrane. It carries out the reaction a quinone + NADH + 5 H(+)(in) = a quinol + NAD(+) + 4 H(+)(out). Its function is as follows. NDH-1 shuttles electrons from NADH, via FMN and iron-sulfur (Fe-S) centers, to quinones in the respiratory chain. The immediate electron acceptor for the enzyme in this species is believed to be ubiquinone. Couples the redox reaction to proton translocation (for every two electrons transferred, four hydrogen ions are translocated across the cytoplasmic membrane), and thus conserves the redox energy in a proton gradient. The polypeptide is NADH-quinone oxidoreductase subunit B 2 (Anaeromyxobacter sp. (strain Fw109-5)).